The primary structure comprises 214 residues: Large ribosomal subunit protein uL4 (214 aa).

The tract at residues 56–86 is disordered; sequence THKVKNRAEVSGTGKKPWKQKSTGKARAGSK. Basic residues predominate over residues 71–85; that stretch reads KPWKQKSTGKARAGS.

Belongs to the universal ribosomal protein uL4 family. Part of the 50S ribosomal subunit.

Functionally, one of the primary rRNA binding proteins, this protein initially binds near the 5'-end of the 23S rRNA. It is important during the early stages of 50S assembly. It makes multiple contacts with different domains of the 23S rRNA in the assembled 50S subunit and ribosome. Forms part of the polypeptide exit tunnel. This Mesomycoplasma hyopneumoniae (strain 232) (Mycoplasma hyopneumoniae) protein is Large ribosomal subunit protein uL4.